The primary structure comprises 257 residues: MLTLLSPAKKLLSISKHYSKETSNPLLLDKALQLVKIMKLKSVEQIADLMDLSRQLAELNYERYQNFDLKNNPMNHSYPALFLFQGDVYQGLNANSWKDEEIEYAQSHLGILSGLYGFLRPLDRIQPYRLEMGVNLENPAGKNLYAFWSKIVTNILNQILAEQSNPVLINLASTEYFKVVDEKKLSYPIVTINFYEQKNSELKMIGILAKKARGMMAKYIMQNRIDSIEQIKEFSESGYLFNKEISSPNSLNFIRIH.

It belongs to the UPF0246 family.

The polypeptide is UPF0246 protein LPC_0782 (Legionella pneumophila (strain Corby)).